The sequence spans 765 residues: MTTYLEFIQQNEERDGVRFSWNVWPSSRLEATRMVVPVAALFTPLKERPDLPPIQYEPVLCSRTTCRAVLNPLCQVDYRAKLWACNFCYQRNQFPPTYAGISELNQPAELLPQFSSIEYVVLRGPQMPLIFLYVVDTCIEDEDLQALKESMQMSLSLLPPTALVGLITFGRMVQVHELGCEGISKSYVFRGTKDLSAKQLQEMLGLSKVPVTQATRGPQVQQPPPSNRFLQPVQKIDMNLTDLLGELQRDPWPVPQGKRPLRSSGVALSIAVGLLECTFPNTGARIMMFIGGPATQGPGMVVGDELKTPIRSWHDIEKDNAKYVKKGTKHFEALANRAATTGHVIDIYACALDQTGLLEMKCCPNLTGGYMVMGDSFNTSLFKQTFQRVFTKDIHGQFKMGFGGTLEIKTSREIKISGAIGPCVSLNSKGPCVSENEIGTGGTCQWKICGLSPTTTLAIYFEVVNQHNAPIPQGGRGAVQFVTQYQHSSGQRRIRVTTIARNWADAQTQIQNIAASFDQEAAAILMARLAIYRAETEEGPDVLRWLDRQLIRLCQKFGEYHKDDPNSFRFSETFSLYPQFMFHLRRSPFLQVFNNSPDESSYYRHHFMRQDLTQSLIMIQPILYAYSFSGPPEPVLLDSSSILADRILLMDTFFQILIYHGETIAQWRKSGYQDMPEYENFRHLLQAPVDDAQEILHSRFPMPRYIDTEHGGSQARFLLSKVNPSQTHNNMYAWGQESGAPILTDDVSLQVFMDHLKKLAVSSAA.

Thr2 carries the post-translational modification N-acetylthreonine. Residues Cys61, Cys66, Cys85, and Cys88 each contribute to the Zn(2+) site. Thr308 is subject to Phosphothreonine. A Gelsolin-like repeat occupies Pro632–Leu718.

Belongs to the SEC23/SEC24 family. SEC23 subfamily. COPII is composed of at least five proteins: the Sec23/24 complex, the Sec13/31 complex and Sar1. Interacts with SEC23IP. Interacts with HTR4. Interacts with SEC16A. Interacts with SLC6A4. Interacts (as part of the Sec23/24 complex) with SEC22B; recruits SEC22B into COPII-coated vesicles and allows the transport of this cargo from the endoplasmic reticulum to the Golgi. Interacts (via Gelsolin-like repeat) with MIA2 and MIA3; specifically involved in the transport of large cargos like the collagen COL7A1. Interacts with DDHD1. Interacts with TMEM39A. Interacts with SACM1L; this interaction is reduced in the absence of TMEM39A. Interacts with kinase FAM20C; transport of FAM20C from the endoplasmic reticulum to the Golgi is likely to be mediated by COPII vesicles. High levels in brain and fibroblasts.

It is found in the cytoplasmic vesicle. Its subcellular location is the COPII-coated vesicle membrane. The protein resides in the endoplasmic reticulum membrane. The protein localises to the cytoplasm. It localises to the cytosol. Component of the coat protein complex II (COPII) which promotes the formation of transport vesicles from the endoplasmic reticulum (ER). The coat has two main functions, the physical deformation of the endoplasmic reticulum membrane into vesicles and the selection of cargo molecules for their transport to the Golgi complex. Required for the translocation of insulin-induced glucose transporter SLC2A4/GLUT4 to the cell membrane. This Mus musculus (Mouse) protein is Protein transport protein Sec23A.